Here is a 769-residue protein sequence, read N- to C-terminus: Polyribonucleotide nucleotidyltransferase (769 aa).

2 residues coordinate Mg(2+): aspartate 490 and aspartate 496. In terms of domain architecture, KH spans 557–616; the sequence is PKIDTIMIPVDKIKVVIGKGGEQIDKIIAETGVKIDIDDEGLCSIFSSDQSAIDRAKEII. One can recognise an S1 motif domain in the interval 626–694; it reads GEVYEAKVVR…DKGRVDASMR (69 aa). Basic and acidic residues predominate over residues 700–734; it reads PEGYVEPERKPRERRDNKDRRNGNGFDRRNNDRNN. The tract at residues 700-769 is disordered; sequence PEGYVEPERK…FPELSTKKPE (70 aa). Residues 736 to 746 are compositionally biased toward low complexity; that stretch reads NNHNNNSGNHS. Residues 747-769 are compositionally biased toward basic and acidic residues; sequence FELRERKSHVDHEFPELSTKKPE.

Belongs to the polyribonucleotide nucleotidyltransferase family. Mg(2+) is required as a cofactor.

It localises to the cytoplasm. The enzyme catalyses RNA(n+1) + phosphate = RNA(n) + a ribonucleoside 5'-diphosphate. In terms of biological role, involved in mRNA degradation. Catalyzes the phosphorolysis of single-stranded polyribonucleotides processively in the 3'- to 5'-direction. The sequence is that of Polyribonucleotide nucleotidyltransferase from Lactococcus lactis subsp. cremoris (strain SK11).